The chain runs to 610 residues: uncharacterized protein (610 aa).

Positions 1 to 28 (MDSPSTSESPLKKNTIQDFGESNMTESP) are enriched in polar residues. Residues 1–36 (MDSPSTSESPLKKNTIQDFGESNMTESPQSKEEIDE) form a disordered region. The RING-type zinc finger occupies 41 to 82 (CSVCKNEIIDTTSLSDCCHEFCYDCIVGWLTKGSGPFCPMCK). Disordered stretches follow at residues 390–411 (YRGQPQAPLRLGPNATNPFRPA) and 431–515 (TSSA…SADR). The segment covering 432 to 447 (SSAGAGSARSRGSDSV) has biased composition (low complexity). Acidic residues-rich tracts occupy residues 448–470 (VEIDDDDDNDGVDVDDDDREDSD) and 478–487 (SEEDSDEEIQ).

This is an uncharacterized protein from Caenorhabditis elegans.